Consider the following 304-residue polypeptide: Elongation factor Ts (304 aa).

The tract at residues 79–82 (TDFV) is involved in Mg(2+) ion dislocation from EF-Tu.

It belongs to the EF-Ts family.

Its subcellular location is the cytoplasm. Functionally, associates with the EF-Tu.GDP complex and induces the exchange of GDP to GTP. It remains bound to the aminoacyl-tRNA.EF-Tu.GTP complex up to the GTP hydrolysis stage on the ribosome. The protein is Elongation factor Ts of Polaromonas sp. (strain JS666 / ATCC BAA-500).